Here is a 635-residue protein sequence, read N- to C-terminus: Threonine--tRNA ligase (635 aa).

The TGS domain maps to 1–61 (MIKITLKDGS…ENDCTLNLLT (61 aa)). The tract at residues 242–532 (DHRKLGRELD…LTEHYAGAFP (291 aa)) is catalytic. Zn(2+) is bound by residues Cys333, His384, and His509.

It belongs to the class-II aminoacyl-tRNA synthetase family. Homodimer. The cofactor is Zn(2+).

It is found in the cytoplasm. The enzyme catalyses tRNA(Thr) + L-threonine + ATP = L-threonyl-tRNA(Thr) + AMP + diphosphate + H(+). Functionally, catalyzes the attachment of threonine to tRNA(Thr) in a two-step reaction: L-threonine is first activated by ATP to form Thr-AMP and then transferred to the acceptor end of tRNA(Thr). Also edits incorrectly charged L-seryl-tRNA(Thr). The protein is Threonine--tRNA ligase of Acetivibrio thermocellus (strain ATCC 27405 / DSM 1237 / JCM 9322 / NBRC 103400 / NCIMB 10682 / NRRL B-4536 / VPI 7372) (Clostridium thermocellum).